Reading from the N-terminus, the 340-residue chain is DNA-directed RNA polymerase subunit alpha (340 aa).

Residues 1–233 (MIQDEIKVST…DLFIPLINSE (233 aa)) form an alpha N-terminal domain (alpha-NTD) region. The interval 265–340 (TKDVAFKHIF…IQLPKNKNYL (76 aa)) is alpha C-terminal domain (alpha-CTD).

This sequence belongs to the RNA polymerase alpha chain family. As to quaternary structure, in plastids the minimal PEP RNA polymerase catalytic core is composed of four subunits: alpha, beta, beta', and beta''. When a (nuclear-encoded) sigma factor is associated with the core the holoenzyme is formed, which can initiate transcription.

The protein localises to the plastid. The protein resides in the chloroplast. It carries out the reaction RNA(n) + a ribonucleoside 5'-triphosphate = RNA(n+1) + diphosphate. DNA-dependent RNA polymerase catalyzes the transcription of DNA into RNA using the four ribonucleoside triphosphates as substrates. In Marchantia polymorpha (Common liverwort), this protein is DNA-directed RNA polymerase subunit alpha.